The primary structure comprises 62 residues: U-stichotoxin-Hau1a (62 aa).

The first 21 residues, 1-21, serve as a signal peptide directing secretion; sequence MKPAIFLMLFVAMFLISEGEG. Residues 22–31 constitute a propeptide that is removed on maturation; it reads FKPKDAPQER. Residue Pro36 is modified to Hydroxyproline. Intrachain disulfides connect Cys41–Cys53 and Cys44–Cys59.

This sequence belongs to the Hau1a/HC18/HC19 family.

It localises to the secreted. Its subcellular location is the nematocyst. Its function is as follows. Toxin that is lethal to crab. Does not produce the typical symptoms associated with sodium channel toxins in crabs, suggesting that it likely does not act on sodium channels. This is U-stichotoxin-Hau1a from Heteractis aurora (Banded sea anemone).